The following is a 418-amino-acid chain: Triacylglycerol lipase 2 (418 aa).

The first 31 residues, 1–31 (MAGSVMVPSVSIGLALSVLIFFALSLKTLEA), serve as a signal peptide directing secretion. Asn158 is a glycosylation site (N-linked (GlcNAc...) asparagine). Ser190 acts as the Nucleophile in catalysis. Asn286 and Asn342 each carry an N-linked (GlcNAc...) asparagine glycan. Residues Asp360 and His393 each act as charge relay system in the active site.

This sequence belongs to the AB hydrolase superfamily. Lipase family.

The protein resides in the secreted. It catalyses the reaction a triacylglycerol + H2O = a diacylglycerol + a fatty acid + H(+). Functionally, triacylglycerol (TAG) lipase. May be involved for TAG storage breakdown during seed germination. The chain is Triacylglycerol lipase 2 (LIP2) from Arabidopsis thaliana (Mouse-ear cress).